The following is a 61-amino-acid chain: Weak toxin CM-1c (61 aa).

4 cysteine pairs are disulfide-bonded: Cys-3/Cys-21, Cys-14/Cys-37, Cys-41/Cys-53, and Cys-54/Cys-59.

It belongs to the three-finger toxin family. Short-chain subfamily. Orphan group VI sub-subfamily. Expressed by the venom gland.

It localises to the secreted. This chain is Weak toxin CM-1c, found in Hemachatus haemachatus (Rinkhals).